The chain runs to 788 residues: Phosphoribosylformylglycinamidine synthase subunit PurL (788 aa).

The active site involves His-50. 2 residues coordinate ATP: Tyr-53 and Lys-92. Glu-94 is a binding site for Mg(2+). Substrate contacts are provided by residues 95 to 98 and Arg-117; that span reads SHNH. Catalysis depends on His-96, which acts as the Proton acceptor. Asp-118 is a binding site for Mg(2+). A substrate-binding site is contributed by Gln-241. Asp-269 contributes to the Mg(2+) binding site. Residue 313 to 315 coordinates substrate; sequence ESQ. 2 residues coordinate ATP: Asp-524 and Gly-561. Asn-562 lines the Mg(2+) pocket. A substrate-binding site is contributed by Ser-564.

Belongs to the FGAMS family. As to quaternary structure, monomer. Part of the FGAM synthase complex composed of 1 PurL, 1 PurQ and 2 PurS subunits.

The protein localises to the cytoplasm. The enzyme catalyses N(2)-formyl-N(1)-(5-phospho-beta-D-ribosyl)glycinamide + L-glutamine + ATP + H2O = 2-formamido-N(1)-(5-O-phospho-beta-D-ribosyl)acetamidine + L-glutamate + ADP + phosphate + H(+). It participates in purine metabolism; IMP biosynthesis via de novo pathway; 5-amino-1-(5-phospho-D-ribosyl)imidazole from N(2)-formyl-N(1)-(5-phospho-D-ribosyl)glycinamide: step 1/2. Part of the phosphoribosylformylglycinamidine synthase complex involved in the purines biosynthetic pathway. Catalyzes the ATP-dependent conversion of formylglycinamide ribonucleotide (FGAR) and glutamine to yield formylglycinamidine ribonucleotide (FGAM) and glutamate. The FGAM synthase complex is composed of three subunits. PurQ produces an ammonia molecule by converting glutamine to glutamate. PurL transfers the ammonia molecule to FGAR to form FGAM in an ATP-dependent manner. PurS interacts with PurQ and PurL and is thought to assist in the transfer of the ammonia molecule from PurQ to PurL. This chain is Phosphoribosylformylglycinamidine synthase subunit PurL, found in Nostoc punctiforme (strain ATCC 29133 / PCC 73102).